The following is a 732-amino-acid chain: Lanosterol synthase (732 aa).

Threonine 2 is modified (N-acetylthreonine). 7 PFTB repeats span residues 77–121 (ALNG…PLPA), 124–165 (REEI…RILG), 424–468 (PDNP…LLLQ), 483–528 (LCDA…MIDY), 560–600 (LTQG…ACMG), 612–653 (VSRA…HNTC), and 670–712 (QERG…NIFP). The active-site Proton donor is the aspartate 455.

Belongs to the terpene cyclase/mutase family. Monomer. In terms of tissue distribution, widely expressed. Expressed in the hair bulb, the outer root sheath and hair matrix of the hair follicle epithelium. Also detected in dermal papilla, epidermis, sweat glands, sebaceous glands, and blood vessels.

The protein resides in the endoplasmic reticulum membrane. It catalyses the reaction (S)-2,3-epoxysqualene = lanosterol. It functions in the pathway terpene metabolism; lanosterol biosynthesis; lanosterol from farnesyl diphosphate: step 3/3. Its function is as follows. Key enzyme in the cholesterol biosynthesis pathway. Catalyzes the cyclization of (S)-2,3 oxidosqualene to lanosterol, a reaction that forms the sterol nucleus. Through the production of lanosterol may regulate lens protein aggregation and increase transparency. This chain is Lanosterol synthase (LSS), found in Homo sapiens (Human).